The following is a 514-amino-acid chain: Putative transposase y4uI (514 aa).

Residues 11–93 (VREILKLRLD…PDWSAVAREL (83 aa)) form the HTH IS408-type domain. One can recognise an Integrase catalytic domain in the interval 128 to 317 (HGRLPLVMRQ…TRRALFDELD (190 aa)).

Belongs to the transposase IS21/IS408/IS1162 family.

The protein is Putative transposase y4uI of Sinorhizobium fredii (strain NBRC 101917 / NGR234).